The chain runs to 598 residues: Transcription factor cpaR (598 aa).

Residues 22-51 (CNGCRERKRRCVRRKRELPCLSCQAENRPC) constitute a DNA-binding region (zn(2)-C6 fungal-type).

The protein localises to the nucleus. Its function is as follows. Transcription factor; part of the gene cluster that mediates the biosynthesis of the fungal neurotoxin cyclopiazonic acid (CPA), a nanomolar inhibitor of Ca(2+)-ATPase with a unique pentacyclic indole tetramic acid scaffold. The sequence is that of Transcription factor cpaR from Aspergillus oryzae (Yellow koji mold).